The chain runs to 366 residues: MSGNTLGTLFTVTTFGESHGPAIGCVIDGCPPGMALTEADIQAELDRRKPGTSRHVTQRQEADEVEILSGVFEGVTTGTPIALLIRNTDQRSKDYGNIVETFRPGHADYTYWQKYGVRDYRGGGRSSARLTAPIVGAGAVAKKWLRERFGVEVRGYMSALGEIDVPFVDWSHVRENPFFAPNAAIVPELEAYMDALRKDGDSIGARIDVVASGVPVGWGEPVFDRLDADIAKAMMSINAVKGVEIGAGFDSVAQRGSVHGDELTPAGFVGNHAGGVLGGISTGQDITVSIAIKPTSSIRTPRRSITKDGQPATVETFGRHDPCVGIRATPIAESMLALVLIDHALRHRAQCGDVETQTPKIAGSAT.

The NADP(+) site is built by Arg48 and Arg54. FMN-binding positions include 125–127, 238–239, Gly278, 293–297, and Arg319; these read RSS, NA, and KPTSS.

It belongs to the chorismate synthase family. Homotetramer. The cofactor is FMNH2.

The catalysed reaction is 5-O-(1-carboxyvinyl)-3-phosphoshikimate = chorismate + phosphate. Its pathway is metabolic intermediate biosynthesis; chorismate biosynthesis; chorismate from D-erythrose 4-phosphate and phosphoenolpyruvate: step 7/7. In terms of biological role, catalyzes the anti-1,4-elimination of the C-3 phosphate and the C-6 proR hydrogen from 5-enolpyruvylshikimate-3-phosphate (EPSP) to yield chorismate, which is the branch point compound that serves as the starting substrate for the three terminal pathways of aromatic amino acid biosynthesis. This reaction introduces a second double bond into the aromatic ring system. The polypeptide is Chorismate synthase (Burkholderia multivorans (strain ATCC 17616 / 249)).